Consider the following 534-residue polypeptide: MVKPLGEGTRDVSNVGCKSVDLLLASLGGLAAAVAAAYAGELLLRRRKLDQGASMGYKDVKIAPLIERKDSGRRSNLERFSHYVARQLGFEDPNEYPQLCKLANGYLLKTKGYDENVDEYLENEAERDSLYVHLLEEFDRCILTYFSFNWTQSSNLISQALSDESDQKVPKLKDFVMAATRKQRFERVTKDLKVKRVISTLVEEMRVIGSGSSEPHCTEVMSPVAHNKRSPVLLLMGGGMGAGKSTVLKDIFLESFWSEAQADAVVIEADAFKETDVIYRALSSRGHHDDMLQTAELVHQSSTDAASSLLVTALNDGRDVIMDGTLSWEPFVEQMIEMARNVHKQKYRMGEGYKVSEEGTITEKYWEEEEEETKENGKQQNLKPYRIELVGVVCDAYLAVARGIRRALMVKRAVRVKPQLNSHKRFANAFPKYCELVDNARLYCTNAVGGPPRLIAWKDGNSKLLVDPEDIDCLKRVSSLNPDAESIYELYPDPSQLSKPGSVWNDVVLVPSRPKVQKELSDAIRRIEKAQPKN.

Positions 167–196 (QKVPKLKDFVMAATRKQRFERVTKDLKVKR) are calmodulin-binding. Residue 238–245 (GGMGAGKS) participates in ATP binding.

Interacts with calmodulin (CaM) in a calcium Ca(2+)-dependent manner in vitro. Requires Ca(2+) as cofactor.

The protein localises to the mitochondrion outer membrane. The enzyme catalyses NAD(+) + ATP = ADP + NADP(+) + H(+). In terms of biological role, phosphorylates NAD(+) to produce NADP(+) in a calmodulin calcium-dependent manner. Does not possess activity toward NADH. Has broad specificity for the phosphoryl donor, as ATP, CTP, GTP and UTP can be used interchangeably and produce similar efficiencies. May play a role in producing NADP(H) needed to regulate the elicitor-induced reactive oxygen species (ROS) burst by sustaining the activity of NADPH oxidases. Does not seem to play a role in photosynthesis-driven growth. This is Calmodulin calcium-dependent NAD kinase from Arabidopsis thaliana (Mouse-ear cress).